The sequence spans 246 residues: Octanoyltransferase (246 aa).

In terms of domain architecture, BPL/LPL catalytic spans 54 to 240 (DPPPEAVWLL…CLEPNADAAI (187 aa)). Substrate contacts are provided by residues 96–103 (RGGEVTHH), 163–165 (AIG), and 176–178 (GVA). The active-site Acyl-thioester intermediate is Cys194.

Belongs to the LipB family.

It is found in the cytoplasm. It catalyses the reaction octanoyl-[ACP] + L-lysyl-[protein] = N(6)-octanoyl-L-lysyl-[protein] + holo-[ACP] + H(+). The protein operates within protein modification; protein lipoylation via endogenous pathway; protein N(6)-(lipoyl)lysine from octanoyl-[acyl-carrier-protein]: step 1/2. Functionally, catalyzes the transfer of endogenously produced octanoic acid from octanoyl-acyl-carrier-protein onto the lipoyl domains of lipoate-dependent enzymes. Lipoyl-ACP can also act as a substrate although octanoyl-ACP is likely to be the physiological substrate. The polypeptide is Octanoyltransferase (Synechococcus sp. (strain WH7803)).